The following is a 202-amino-acid chain: Adenylate kinase (202 aa).

Position 12-20 (12-20 (GVPGVGKTT)) interacts with ATP.

Belongs to the archaeal adenylate kinase family.

The protein localises to the cytoplasm. It carries out the reaction AMP + ATP = 2 ADP. This Aeropyrum pernix (strain ATCC 700893 / DSM 11879 / JCM 9820 / NBRC 100138 / K1) protein is Adenylate kinase (adkA).